The chain runs to 426 residues: Trigger factor (426 aa).

One can recognise a PPIase FKBP-type domain in the interval 160–240; the sequence is GDTVIGDVTK…IKEVKHLELP (81 aa).

The protein belongs to the FKBP-type PPIase family. Tig subfamily.

Its subcellular location is the cytoplasm. It carries out the reaction [protein]-peptidylproline (omega=180) = [protein]-peptidylproline (omega=0). Functionally, involved in protein export. Acts as a chaperone by maintaining the newly synthesized protein in an open conformation. Functions as a peptidyl-prolyl cis-trans isomerase. This Chlorobaculum tepidum (strain ATCC 49652 / DSM 12025 / NBRC 103806 / TLS) (Chlorobium tepidum) protein is Trigger factor.